The sequence spans 528 residues: Na(+)/H(+) antiporter NhaB (528 aa).

10 consecutive transmembrane segments (helical) span residues 20 to 39, 66 to 86, 97 to 117, 139 to 159, 241 to 261, 304 to 324, 349 to 369, 390 to 410, 448 to 468, and 476 to 496; these read WFKIAIISFLVINPIVFYFN, PGGLLAIEAVAIGMTSPSQVL, LLLVFMVAGIYFMKQLLLFVF, AFLSAFLDALTVIAVIITVAV, IRMSPVTVPVFFAGITTCFLV, AVIGVWLIAGLALHLASVGLI, EEALPFTALLAVFFAIVAVII, LVIFYIANGLLSMVSDNVFVG, ATPNGQAAFLFLLTSAIAPLI, and VWMALPYTIVLSIVGVLAIQL.

Belongs to the NhaB Na(+)/H(+) (TC 2.A.34) antiporter family.

It localises to the cell inner membrane. It carries out the reaction 2 Na(+)(in) + 3 H(+)(out) = 2 Na(+)(out) + 3 H(+)(in). Functionally, na(+)/H(+) antiporter that extrudes sodium in exchange for external protons. In Shewanella pealeana (strain ATCC 700345 / ANG-SQ1), this protein is Na(+)/H(+) antiporter NhaB.